A 1755-amino-acid polypeptide reads, in one-letter code: Transposon Ty1-PR1 Gag-Pol polyprotein (1755 aa).

Polar residues-rich tracts occupy residues 1–23, 48–60, 71–93, and 127–152; these read MESQ…SVTS, TKAN…TPAS, SPQT…MMTQ, and QSQF…GNTF. Disordered stretches follow at residues 1-93, 126-173, and 352-421; these read MESQ…MMTQ, PQSQ…RPPP, and GSRN…SKST. Residues 153 to 165 show a composition bias toward low complexity; sequence TDSSSADSDMTST. The RNA-binding stretch occupies residues 299 to 401; sequence NNGIHINNKV…NSKSKTARAH (103 aa). A compositionally biased stretch (low complexity) spans 402-418; it reads NVSTSNNSPSTDNDSIS. Ser-416 carries the post-translational modification Phosphoserine. Asp-461 acts as the For protease activity; shared with dimeric partner in catalysis. The interval 583-640 is integrase-type zinc finger-like; sequence NVHTSESTRKYPYPFIHRMLAHANAQTIRYSLKNNTITYFNESDVDWSSAIDYQCPDC. Positions 660–835 constitute an Integrase catalytic domain; it reads NSYEPFQYLH…AGLDISTLLP (176 aa). Residues Asp-671 and Asp-736 each coordinate Mg(2+). Disordered stretches follow at residues 956–1087, 1092–1111, and 1130–1187; these read SKAV…ETEK, RSPS…NIVP, and DLPL…DNET. Residues 960–969 show a composition bias toward low complexity; that stretch reads SPTDSTPPST. Residues 1005-1015 show a composition bias toward polar residues; sequence STPQISNIEST. A compositionally biased stretch (basic and acidic residues) spans 1038–1053; sequence ESSHASKSKDFRHSDS. Composition is skewed to polar residues over residues 1054–1082 and 1101–1111; these read YSEN…QISD and PENNSSHNIVP. Positions 1178–1212 match the Bipartite nuclear localization signal motif; it reads KKRSLEDNETEIKVSRDTWNTKNMRSLEPPRSKKR. One can recognise a Reverse transcriptase Ty1/copia-type domain in the interval 1338–1476; the sequence is NNYYITQLDI…DILGLEIKYQ (139 aa). Positions 1346, 1427, 1428, 1610, 1652, and 1685 each coordinate Mg(2+). The RNase H Ty1/copia-type domain maps to 1610–1752; sequence DASYGNQPYY…IKTFKLLTNK (143 aa).

The capsid protein forms a homotrimer, from which the VLPs are assembled. The protease is a homodimer, whose active site consists of two apposed aspartic acid residues. In terms of processing, initially, virus-like particles (VLPs) are composed of the structural unprocessed proteins Gag and Gag-Pol, and also contain the host initiator methionine tRNA (tRNA(i)-Met) which serves as a primer for minus-strand DNA synthesis, and a dimer of genomic Ty RNA. Processing of the polyproteins occurs within the particle and proceeds by an ordered pathway, called maturation. First, the protease (PR) is released by autocatalytic cleavage of the Gag-Pol polyprotein yielding capsid protein p45 and a Pol-p154 precursor protein. This cleavage is a prerequisite for subsequent processing of Pol-p154 at the remaining sites to release the mature structural and catalytic proteins. Maturation takes place prior to the RT reaction and is required to produce transposition-competent VLPs.

The protein resides in the cytoplasm. The protein localises to the nucleus. It catalyses the reaction DNA(n) + a 2'-deoxyribonucleoside 5'-triphosphate = DNA(n+1) + diphosphate. The catalysed reaction is Endonucleolytic cleavage to 5'-phosphomonoester.. Its function is as follows. Capsid protein (CA) is the structural component of the virus-like particle (VLP), forming the shell that encapsulates the retrotransposons dimeric RNA genome. The particles are assembled from trimer-clustered units and there are holes in the capsid shells that allow for the diffusion of macromolecules. CA also has nucleocapsid-like chaperone activity, promoting primer tRNA(i)-Met annealing to the multipartite primer-binding site (PBS), dimerization of Ty1 RNA and initiation of reverse transcription. Functionally, the aspartyl protease (PR) mediates the proteolytic cleavages of the Gag and Gag-Pol polyproteins after assembly of the VLP. Reverse transcriptase/ribonuclease H (RT) is a multifunctional enzyme that catalyzes the conversion of the retro-elements RNA genome into dsDNA within the VLP. The enzyme displays a DNA polymerase activity that can copy either DNA or RNA templates, and a ribonuclease H (RNase H) activity that cleaves the RNA strand of RNA-DNA heteroduplexes during plus-strand synthesis and hydrolyzes RNA primers. The conversion leads to a linear dsDNA copy of the retrotransposon that includes long terminal repeats (LTRs) at both ends. In terms of biological role, integrase (IN) targets the VLP to the nucleus, where a subparticle preintegration complex (PIC) containing at least integrase and the newly synthesized dsDNA copy of the retrotransposon must transit the nuclear membrane. Once in the nucleus, integrase performs the integration of the dsDNA into the host genome. The chain is Transposon Ty1-PR1 Gag-Pol polyprotein (TY1B-PR1) from Saccharomyces cerevisiae (strain ATCC 204508 / S288c) (Baker's yeast).